Here is a 211-residue protein sequence, read N- to C-terminus: SsrA-binding protein (211 aa).

Disordered regions lie at residues Met-1–Ser-20 and Arg-170–Asn-211. Polar residues predominate over residues Gln-177 to Arg-187.

The protein belongs to the SmpB family.

The protein resides in the cytoplasm. Functionally, required for rescue of stalled ribosomes mediated by trans-translation. Binds to transfer-messenger RNA (tmRNA), required for stable association of tmRNA with ribosomes. tmRNA and SmpB together mimic tRNA shape, replacing the anticodon stem-loop with SmpB. tmRNA is encoded by the ssrA gene; the 2 termini fold to resemble tRNA(Ala) and it encodes a 'tag peptide', a short internal open reading frame. During trans-translation Ala-aminoacylated tmRNA acts like a tRNA, entering the A-site of stalled ribosomes, displacing the stalled mRNA. The ribosome then switches to translate the ORF on the tmRNA; the nascent peptide is terminated with the 'tag peptide' encoded by the tmRNA and targeted for degradation. The ribosome is freed to recommence translation, which seems to be the essential function of trans-translation. The sequence is that of SsrA-binding protein from Tropheryma whipplei (strain TW08/27) (Whipple's bacillus).